The chain runs to 465 residues: VGFKAGVKDYKLTYYTPDYETKDTDILAAFRVTPQPGVPPEEAGAAVAAESSTGTWTTVWTDGLTSLDRYKGRCYHIEPVPGEESQFIAYVAYPLDLFEEGSVTNMFTSIVGNVFGFKALRALRLEDLRIPTAYVKTFQGPPHGIQVERDKLNKYGRPLLGCTIKPKLGLSAKNYGRAVYECLRGGLDFTKDDENVNSQPFMRWRDRFLFCAEAIYKSQAETGEIKGHYLNATAGTCEDMMKRAVFARELGVPIVMHDYLTGGFTANTTLAHYCRDNGLLLHIHRAMHAVIDRQKNHGMHFRVLAKALRMSGGDHIHAGTVVGKLEGEREITLGFVDLLRDDFIEKDRSRGIYFTQDWVSLPGVLPVASGGIHVWHMPALTEIFGDDSVLQFGGGTLGHPWGNAPGAVANRVALEACVQARNEGRDLAREGNDIIREACKWSPELAAACEVWKEIKFEFEAMDTL.

Residue lysine 4 is modified to N6,N6,N6-trimethyllysine. Substrate-binding residues include asparagine 113 and threonine 163. Lysine 165 (proton acceptor) is an active-site residue. Lysine 167 serves as a coordination point for substrate. 3 residues coordinate Mg(2+): lysine 191, aspartate 193, and glutamate 194. N6-carboxylysine is present on lysine 191. The active-site Proton acceptor is the histidine 284. Positions 285, 317, and 369 each coordinate substrate.

The protein belongs to the RuBisCO large chain family. Type I subfamily. Heterohexadecamer of 8 large chains and 8 small chains; disulfide-linked. The disulfide link is formed within the large subunit homodimers. Mg(2+) serves as cofactor. In terms of processing, the disulfide bond which can form in the large chain dimeric partners within the hexadecamer appears to be associated with oxidative stress and protein turnover.

It is found in the plastid. Its subcellular location is the chloroplast. It carries out the reaction 2 (2R)-3-phosphoglycerate + 2 H(+) = D-ribulose 1,5-bisphosphate + CO2 + H2O. The catalysed reaction is D-ribulose 1,5-bisphosphate + O2 = 2-phosphoglycolate + (2R)-3-phosphoglycerate + 2 H(+). In terms of biological role, ruBisCO catalyzes two reactions: the carboxylation of D-ribulose 1,5-bisphosphate, the primary event in carbon dioxide fixation, as well as the oxidative fragmentation of the pentose substrate in the photorespiration process. Both reactions occur simultaneously and in competition at the same active site. The polypeptide is Ribulose bisphosphate carboxylase large chain (Fragaria ananassa (Strawberry)).